Consider the following 622-residue polypeptide: Chaperone protein HscA homolog (622 aa).

It belongs to the heat shock protein 70 family.

Functionally, chaperone involved in the maturation of iron-sulfur cluster-containing proteins. Has a low intrinsic ATPase activity which is markedly stimulated by HscB. The protein is Chaperone protein HscA homolog of Burkholderia pseudomallei (strain 668).